Consider the following 509-residue polypeptide: Heat shock 70 kDa protein 14 (509 aa).

The protein belongs to the heat shock protein 70 family. In terms of assembly, component of ribosome-associated complex (RAC), a heterodimer composed of Hsp70/DnaK-type chaperone HSPA14 and Hsp40/DnaJ-type chaperone DNAJC2.

It is found in the cytoplasm. The protein localises to the cytosol. In terms of biological role, component of the ribosome-associated complex (RAC), a complex involved in folding or maintaining nascent polypeptides in a folding-competent state. In the RAC complex, binds to the nascent polypeptide chain, while DNAJC2 stimulates its ATPase activity. In Macaca fascicularis (Crab-eating macaque), this protein is Heat shock 70 kDa protein 14 (HSPA14).